We begin with the raw amino-acid sequence, 282 residues long: MFDFIKSIIIGIVEGLTEFLPVSSTGHIILAEALMKIPGGMVWTKSFTAVFDYAIQLGAIFAVIQLYFHKLNPFSPRKTSREQFQTWRLWIKVIVGVLPAMVFGLLLNNFMDAHLLNPWVVSATLIIYGIAFIVIENRQKNIAPVVTEVNRITFKMALFIGLFQVLSLVPGTSRSGATILGAVILGASRFVAAEFSFFLSIPVMFGVTILKVGSFLLKGGSFTGAQLFVMLIGFVVSWVVALFAIKVMMRYIQNNDFKIFGWYRIVVGILFLILGIAGLVKM.

8 helical membrane passes run 2–22 (FDFI…FLPV), 47–67 (FTAV…IQLY), 90–110 (WIKV…LNNF), 115–135 (LLNP…FIVI), 152–172 (ITFK…VPGT), 190–210 (FVAA…VTIL), 225–245 (AQLF…LFAI), and 259–279 (IFGW…IAGL).

The protein belongs to the UppP family.

It localises to the cell membrane. It carries out the reaction di-trans,octa-cis-undecaprenyl diphosphate + H2O = di-trans,octa-cis-undecaprenyl phosphate + phosphate + H(+). Functionally, catalyzes the dephosphorylation of undecaprenyl diphosphate (UPP). Confers resistance to bacitracin. The sequence is that of Undecaprenyl-diphosphatase from Leuconostoc citreum (strain KM20).